The primary structure comprises 494 residues: MRLTPNYDYEVSSIDKKKRGYIVQIIGPVLDVAFSPGMMPSIYNALVVQGRHKQEPNVTCEVQQLLGNNRVRAVAMSDTDGLMRGMEVIDTGTPISVPVGGSTLGRIFNVLGEPVDQLGPVETNQLSPIHRSAPPFLKLDTRLSIFETGIKVVDLLAPYRRGGKVGLFGGAGVGKTVLIMELINNIAKAYGGVSVFGGVGERTREGNDLYMEMKESGVINQQKLAESKVALVYGQMNEPPGARMRVGLTALTMAEYFRDVNRQDVLLFIDNIFRFVQAGSEVSALLGRMPSAVGYQPTLSTEMGSLQERITSTKEGSITSIQAVYVPADDLTDPAPATTFAHLDATTVLSRSLAAKGIYPAVDPLDSTSMMLQPQIVGEQHYKTAQRVKQTLQRYKELQDIIAILGLDELSDDDRLTVARARKIERFLSQPFFVAEIFTGSPGKYVSLAETIRGCTLILSGEFDDLPEQTFYLVGTIDEVNAKAILEEEKNFTK.

Position 169–176 (169–176 (GGAGVGKT)) interacts with ATP.

Belongs to the ATPase alpha/beta chains family. F-type ATPases have 2 components, CF(1) - the catalytic core - and CF(0) - the membrane proton channel. CF(1) has five subunits: alpha(3), beta(3), gamma(1), delta(1), epsilon(1). CF(0) has four main subunits: a(1), b(1), b'(1) and c(9-12).

It localises to the plastid membrane. It catalyses the reaction ATP + H2O + 4 H(+)(in) = ADP + phosphate + 5 H(+)(out). In terms of biological role, produces ATP from ADP in the presence of a proton gradient across the membrane. The catalytic sites are hosted primarily by the beta subunits. The polypeptide is ATP synthase subunit beta, plastid (atpB) (Cuscuta sandwichiana (Kauna'oa)).